Reading from the N-terminus, the 162-residue chain is Peptidyl-prolyl cis-trans isomerase-like 1 (162 aa).

The region spanning 1–155 (MTTNIVLETT…EEVKIVKARV (155 aa)) is the PPIase cyclophilin-type domain.

This sequence belongs to the cyclophilin-type PPIase family. PPIL1 subfamily.

The enzyme catalyses [protein]-peptidylproline (omega=180) = [protein]-peptidylproline (omega=0). Its function is as follows. PPIases accelerate the folding of proteins. It catalyzes the cis-trans isomerization of proline imidic peptide bonds in oligopeptides. The polypeptide is Peptidyl-prolyl cis-trans isomerase-like 1 (CYP1) (Gibberella zeae (strain ATCC MYA-4620 / CBS 123657 / FGSC 9075 / NRRL 31084 / PH-1) (Wheat head blight fungus)).